The following is a 71-amino-acid chain: Small ribosomal subunit protein bS21 (71 aa).

The interval 38 to 71 (YEKPTTVRKRAKAAAQKRHAKKLSRENARRVRLY) is disordered. Basic residues predominate over residues 43–59 (TVRKRAKAAAQKRHAKK). A compositionally biased stretch (basic and acidic residues) spans 60–71 (LSRENARRVRLY).

This sequence belongs to the bacterial ribosomal protein bS21 family.

This Aliivibrio fischeri (strain ATCC 700601 / ES114) (Vibrio fischeri) protein is Small ribosomal subunit protein bS21.